A 183-amino-acid polypeptide reads, in one-letter code: Transmembrane protein 252 (183 aa).

A run of 2 helical transmembrane segments spans residues 8–28 (ILCA…GFFI) and 39–59 (LVVA…GIFW).

It localises to the membrane. This chain is Transmembrane protein 252 (Tmem252), found in Mus musculus (Mouse).